The primary structure comprises 478 residues: Cysteine--tRNA ligase (478 aa).

Cys-37 is a binding site for Zn(2+). Positions 39 to 49 (PTVYHYAHIGN) match the 'HIGH' region motif. Residues Cys-224, His-249, and Glu-253 each coordinate Zn(2+). Positions 281-285 (KMSKS) match the 'KMSKS' region motif. Residue Lys-284 participates in ATP binding.

The protein belongs to the class-I aminoacyl-tRNA synthetase family. As to quaternary structure, monomer. Zn(2+) is required as a cofactor.

It localises to the cytoplasm. The enzyme catalyses tRNA(Cys) + L-cysteine + ATP = L-cysteinyl-tRNA(Cys) + AMP + diphosphate. The polypeptide is Cysteine--tRNA ligase (Protochlamydia amoebophila (strain UWE25)).